Consider the following 222-residue polypeptide: N-acetyltransferase 8B (222 aa).

Topologically, residues 1–42 (MVSYHICEYQDSDYKSVVDVFTKGAEEYIPSTFRHLLLLPRT) are cytoplasmic. The helical; Signal-anchor for type II membrane protein transmembrane segment at 43 to 67 (LLLLLGVSLALVLVSGSWLLAVVCI) threads the bilayer. Residues 62–217 (LAVVCIFFLL…VGIRFVQLNY (156 aa)) enclose the N-acetyltransferase domain. Residues 68–222 (FFLLPFLWFL…VQLNYSFPSA (155 aa)) are Lumenal-facing. The residue at position 99 (lysine 99) is an N6-acetyllysine.

The protein belongs to the NAT8 family. Acetylation on Lys-99 modulates enzymatic activity.

It localises to the endoplasmic reticulum-Golgi intermediate compartment membrane. Its subcellular location is the endoplasmic reticulum membrane. The catalysed reaction is L-lysyl-[protein] + acetyl-CoA = N(6)-acetyl-L-lysyl-[protein] + CoA + H(+). Its function is as follows. Endoplasmic reticulum (ER)-membrane-bound lysine N-acetyltransferase catalyzing the N6-acetylation of lysine residues in the lumen of the ER in various proteins, including PROM1 and BACE1, using acetyl-CoA as acetyl donor. Thereby, may regulate apoptosis through the acetylation and the regulation of the expression of PROM1. Acetylates and stabilizes BACE1 immature protein, leading to increased steady-state levels in neurons. By acting on BACE1 expression, may regulate amyloid beta-peptide formation. N(6)-lysine acetylation in ER maintains protein homeostasis and regulates reticulophagy. In Rattus norvegicus (Rat), this protein is N-acetyltransferase 8B.